We begin with the raw amino-acid sequence, 198 residues long: Holliday junction resolvase RecU (198 aa).

Thr83, Asp85, Glu98, and Gln117 together coordinate Mg(2+).

This sequence belongs to the RecU family. Mg(2+) is required as a cofactor.

It is found in the cytoplasm. The catalysed reaction is Endonucleolytic cleavage at a junction such as a reciprocal single-stranded crossover between two homologous DNA duplexes (Holliday junction).. Functionally, endonuclease that resolves Holliday junction intermediates in genetic recombination. Cleaves mobile four-strand junctions by introducing symmetrical nicks in paired strands. Promotes annealing of linear ssDNA with homologous dsDNA. Required for DNA repair, homologous recombination and chromosome segregation. This chain is Holliday junction resolvase RecU, found in Streptococcus thermophilus (strain CNRZ 1066).